A 413-amino-acid chain; its full sequence is Multifunctional CCA protein (413 aa).

Positions 8 and 11 each coordinate ATP. CTP is bound by residues Gly-8 and Arg-11. Residues Asp-21 and Asp-23 each contribute to the Mg(2+) site. Residues Arg-91, Arg-143, and Arg-146 each coordinate ATP. CTP-binding residues include Arg-91, Arg-143, and Arg-146. The HD domain maps to 232-333; it reads TGVHVMMVVD…VRLFERSDAL (102 aa).

It belongs to the tRNA nucleotidyltransferase/poly(A) polymerase family. Bacterial CCA-adding enzyme type 1 subfamily. In terms of assembly, monomer. Can also form homodimers and oligomers. Requires Mg(2+) as cofactor. Ni(2+) is required as a cofactor.

The catalysed reaction is a tRNA precursor + 2 CTP + ATP = a tRNA with a 3' CCA end + 3 diphosphate. It catalyses the reaction a tRNA with a 3' CCA end + 2 CTP + ATP = a tRNA with a 3' CCACCA end + 3 diphosphate. In terms of biological role, catalyzes the addition and repair of the essential 3'-terminal CCA sequence in tRNAs without using a nucleic acid template. Adds these three nucleotides in the order of C, C, and A to the tRNA nucleotide-73, using CTP and ATP as substrates and producing inorganic pyrophosphate. tRNA 3'-terminal CCA addition is required both for tRNA processing and repair. Also involved in tRNA surveillance by mediating tandem CCA addition to generate a CCACCA at the 3' terminus of unstable tRNAs. While stable tRNAs receive only 3'-terminal CCA, unstable tRNAs are marked with CCACCA and rapidly degraded. This is Multifunctional CCA protein from Burkholderia lata (strain ATCC 17760 / DSM 23089 / LMG 22485 / NCIMB 9086 / R18194 / 383).